The sequence spans 159 residues: Phosphopantetheine adenylyltransferase (159 aa).

Thr-10 contacts substrate. Residues 10-11 (TF) and His-18 each bind ATP. Substrate contacts are provided by Lys-42, Met-74, and Arg-88. ATP is bound by residues 89–91 (GLR), Glu-99, and 124–130 (WSFISSS).

It belongs to the bacterial CoaD family. In terms of assembly, homohexamer. Mg(2+) serves as cofactor.

The protein localises to the cytoplasm. It catalyses the reaction (R)-4'-phosphopantetheine + ATP + H(+) = 3'-dephospho-CoA + diphosphate. Its pathway is cofactor biosynthesis; coenzyme A biosynthesis; CoA from (R)-pantothenate: step 4/5. Its function is as follows. Reversibly transfers an adenylyl group from ATP to 4'-phosphopantetheine, yielding dephospho-CoA (dPCoA) and pyrophosphate. This Salmonella typhimurium (strain LT2 / SGSC1412 / ATCC 700720) protein is Phosphopantetheine adenylyltransferase.